A 299-amino-acid polypeptide reads, in one-letter code: Deoxyribonuclease-1-like 2 (299 aa).

The first 20 residues, methionine 1–alanine 20, serve as a signal peptide directing secretion. Residues glutamate 99 and histidine 170 contribute to the active site. The cysteines at positions 209 and 245 are disulfide-linked.

This sequence belongs to the DNase I family. The cofactor is Mg(2+). Requires Ca(2+) as cofactor. As to expression, preferentially expressed in the skin and up-regulated during keratinocytes differentiation. Highly abundant (at protein level) in the stratum granulosum.

Its subcellular location is the cytoplasm. The protein localises to the secreted. Its function is as follows. Divalent cation-dependent acid DNA endonuclease involved in the breakdown of the nucleus during corneocyte formation of epidermal keratinocytes. May play an immune role by eliminating harmful DNA released into the extracellular environment by damaged epidermal cells. In Homo sapiens (Human), this protein is Deoxyribonuclease-1-like 2 (DNASE1L2).